The following is a 447-amino-acid chain: Elongation factor 1-alpha (447 aa).

The region spanning 5-230 (KFHINIVVIG…DQINDAKRPS (226 aa)) is the tr-type G domain. The segment at 14–21 (GHVDSGKS) is G1. 14 to 21 (GHVDSGKS) contributes to the GTP binding site. K55 carries the post-translational modification N6,N6-dimethyllysine. The tract at residues 70–74 (GITID) is G2. K79 bears the N6,N6,N6-trimethyllysine mark. Positions 91-94 (DAPG) are G3. GTP contacts are provided by residues 91-95 (DAPGH) and 153-156 (NKMD). The G4 stretch occupies residues 153 to 156 (NKMD). At K187 the chain carries N6,N6,N6-trimethyllysine. The G5 stretch occupies residues 194 to 196 (SGF). At K261 the chain carries N6-methyllysine. The residue at position 289 (E289) is a 5-glutamyl glycerylphosphorylethanolamine. K306 is subject to N6,N6,N6-trimethyllysine. Residue E362 is modified to 5-glutamyl glycerylphosphorylethanolamine. An N6,N6,N6-trimethyllysine modification is found at K396.

This sequence belongs to the TRAFAC class translation factor GTPase superfamily. Classic translation factor GTPase family. EF-Tu/EF-1A subfamily. As to expression, was detected in all tissues examined but was most abundant in roots and salt-adapted cultured cells.

The protein resides in the cytoplasm. In terms of biological role, this protein promotes the GTP-dependent binding of aminoacyl-tRNA to the A-site of ribosomes during protein biosynthesis. The protein is Elongation factor 1-alpha of Nicotiana tabacum (Common tobacco).